The sequence spans 132 residues: uncharacterized protein (132 aa).

In terms of biological role, the presence of the two linear plasmids, termed pGKL1 and pGKL2, in strains of Kluyveromyces lactis confers the killer phenotype to the host cell, by promoting the secretion of a toxin able to inhibit the growth of sensitive strains. This is an uncharacterized protein from Kluyveromyces lactis (strain ATCC 8585 / CBS 2359 / DSM 70799 / NBRC 1267 / NRRL Y-1140 / WM37) (Yeast).